The following is a 342-amino-acid chain: L-lysine 2,3-aminomutase (342 aa).

The Radical SAM core domain maps to 106–329 (HKYHNRALLL…PKLAREIGGE (224 aa)). Cys120, Cys124, and Cys127 together coordinate [4Fe-4S] cluster. Residue Lys332 is modified to N6-(pyridoxal phosphate)lysine.

It belongs to the radical SAM superfamily. KamA family. The cofactor is [4Fe-4S] cluster. Pyridoxal 5'-phosphate is required as a cofactor.

The catalysed reaction is L-lysine = D-beta-lysine. Functionally, with EpmA is involved in the beta-lysylation step of the post-translational modification of translation elongation factor P (EF-P) on 'Lys-34'. EpmB appears to act before EpmA. Displays lysine 2,3-aminomutase activity, producing (R)-beta-lysine from (S)-alpha-lysine (L-lysine). Cannot use (S)-ornithine or (R)-alpha-lysine as a substrate. The protein is L-lysine 2,3-aminomutase (epmB) of Escherichia coli (strain K12).